The sequence spans 33 residues: Photosystem II reaction center protein Psb30 (33 aa).

Residues 5–25 traverse the membrane as a helical segment; sequence LIVQLGSLALITVAGPAIIVL.

Belongs to the Psb30/Ycf12 family. As to quaternary structure, PSII is composed of 1 copy each of membrane proteins PsbA, PsbB, PsbC, PsbD, PsbE, PsbF, PsbH, PsbI, PsbJ, PsbK, PsbL, PsbM, PsbT, PsbY, PsbZ, Psb30/Ycf12, peripheral proteins of the oxygen-evolving complex and a large number of cofactors. It forms dimeric complexes.

The protein resides in the plastid. Its subcellular location is the chloroplast thylakoid membrane. Functionally, a core subunit of photosystem II (PSII), probably helps stabilize the reaction center. In Euglena stellata, this protein is Photosystem II reaction center protein Psb30.